We begin with the raw amino-acid sequence, 466 residues long: Uronate isomerase (466 aa).

It belongs to the metallo-dependent hydrolases superfamily. Uronate isomerase family.

It carries out the reaction D-glucuronate = D-fructuronate. The enzyme catalyses aldehydo-D-galacturonate = keto-D-tagaturonate. Its pathway is carbohydrate metabolism; pentose and glucuronate interconversion. This chain is Uronate isomerase, found in Clostridium perfringens (strain 13 / Type A).